We begin with the raw amino-acid sequence, 273 residues long: Putative carboxypeptidase YodJ (273 aa).

The first 23 residues, 1 to 23 (MKKSGKWFSLAAALSVTAIVGAG), serve as a signal peptide directing secretion. A lipid anchor (N-palmitoyl cysteine) is attached at Cys24. Cys24 carries S-diacylglycerol cysteine lipidation. The disordered stretch occupies residues 27-58 (SNGDAQKDTKTTAETKQTEQKTADSKKSNTQN). Residues 31–53 (AQKDTKTTAETKQTEQKTADSKK) are compositionally biased toward basic and acidic residues.

This sequence belongs to the peptidase M15B family.

It is found in the cell membrane. The polypeptide is Putative carboxypeptidase YodJ (yodJ) (Bacillus subtilis (strain 168)).